Here is a 276-residue protein sequence, read N- to C-terminus: Type II pantothenate kinase (276 aa).

Asp8–Lys15 serves as a coordination point for ATP. Glu76 (proton acceptor) is an active-site residue. ATP-binding positions include Thr105, Gly127–Met131, Phe143, and Ser230.

The protein belongs to the type II pantothenate kinase family. In terms of assembly, homodimer.

It is found in the cytoplasm. It catalyses the reaction (R)-pantothenate + ATP = (R)-4'-phosphopantothenate + ADP + H(+). The protein operates within cofactor biosynthesis; coenzyme A biosynthesis; CoA from (R)-pantothenate: step 1/5. Functionally, catalyzes the phosphorylation of pantothenate (Pan), the first step in CoA biosynthesis. This is Type II pantothenate kinase from Bacillus thuringiensis subsp. konkukian (strain 97-27).